A 516-amino-acid chain; its full sequence is Cysteine--tRNA ligase (516 aa).

Position 32 (Cys32) interacts with Zn(2+). A 'HIGH' region motif is present at residues 34 to 44 (PTVYMYAHIGN). Residues Cys230, His255, and Glu259 each coordinate Zn(2+). The short motif at 287-291 (KMSKS) is the 'KMSKS' region element. Lys290 serves as a coordination point for ATP.

Belongs to the class-I aminoacyl-tRNA synthetase family. In terms of assembly, monomer. The cofactor is Zn(2+).

The protein localises to the cytoplasm. The enzyme catalyses tRNA(Cys) + L-cysteine + ATP = L-cysteinyl-tRNA(Cys) + AMP + diphosphate. This is Cysteine--tRNA ligase from Salinibacter ruber (strain DSM 13855 / M31).